A 310-amino-acid polypeptide reads, in one-letter code: Cytochrome P450 monooxygenase ppzG (310 aa).

Residue Cys-288 participates in heme binding.

It belongs to the cytochrome P450 family. The cofactor is heme.

It functions in the pathway secondary metabolite biosynthesis. Its function is as follows. Cytochrome P450 monooxygenase; part of the gene cluster that mediates the biosynthesis of pyrrolopyrazines, secondary metabolites showing insecticidal activity. The role of ppzG within the pathway has still to be determined. The single multifunctional NRPS ppzA is sufficient to produce peramine via condensation of 1-pyrroline-5-carboxylate and arginine, N-methylation of the alpha-amino group of arginine and reduction of the thioester and the cyclization to form an iminium ion resulting in release from the peptide synthetase. Deprotonation of this intermediate and oxidation of the pyrroline ring would give rise to peramine. In Epichloe species that produce only peramine, the peramine synthetase gene is not localized in a gene cluster, in contrast to Metarhizium species that contain additional pyrrolopyrazine biosynthesis genes. The 2-oxoglutarate-Fe(II) type oxidoreductase ppzC hydroxylates peramine to yield the newly identified compound 8-hydroxyperamine whereas ppzD converts L-proline into trans-4-hydroxy-L-proline, a precursor of peramine biosynthesis. This chain is Cytochrome P450 monooxygenase ppzG (ppzG), found in Metarhizium majus (strain ARSEF 297).